A 434-amino-acid polypeptide reads, in one-letter code: Adenylosuccinate synthetase (434 aa).

Residues 22–28 and 50–52 contribute to the GTP site; these read GDEGKGK and GHT. Aspartate 23 acts as the Proton acceptor in catalysis. Residues aspartate 23 and glycine 50 each coordinate Mg(2+). Residues 23–26, 48–51, threonine 139, arginine 153, glutamine 234, threonine 249, and arginine 313 each bind IMP; these read DEGK and NAGH. The Proton donor role is filled by histidine 51. 309-315 contacts substrate; it reads ATTGRKR. Residues arginine 315, 341-343, and 423-425 contribute to the GTP site; these read KLD and SVG.

It belongs to the adenylosuccinate synthetase family. In terms of assembly, homodimer. It depends on Mg(2+) as a cofactor.

The protein localises to the cytoplasm. It catalyses the reaction IMP + L-aspartate + GTP = N(6)-(1,2-dicarboxyethyl)-AMP + GDP + phosphate + 2 H(+). It functions in the pathway purine metabolism; AMP biosynthesis via de novo pathway; AMP from IMP: step 1/2. Plays an important role in the de novo pathway of purine nucleotide biosynthesis. Catalyzes the first committed step in the biosynthesis of AMP from IMP. The polypeptide is Adenylosuccinate synthetase (Chlorobium luteolum (strain DSM 273 / BCRC 81028 / 2530) (Pelodictyon luteolum)).